Consider the following 545-residue polypeptide: Pseudouridylate synthase RPUSD2 (545 aa).

Residues 48–121 are disordered; that stretch reads GLRASHQQNG…PPPKKRRTGV (74 aa). Ser-68 is modified (phosphoserine). The active site involves Asp-274. Residue Thr-477 is modified to Phosphothreonine.

The protein belongs to the pseudouridine synthase RluA family.

It carries out the reaction a uridine in mRNA = a pseudouridine in mRNA. Functionally, pseudouridine synthase that catalyzes pseudouridylation of mRNAs. This is Pseudouridylate synthase RPUSD2 from Homo sapiens (Human).